A 509-amino-acid chain; its full sequence is 2,3-bisphosphoglycerate-independent phosphoglycerate mutase (509 aa).

Aspartate 11 serves as a coordination point for Mn(2+). Tyrosine 35 is modified (phosphotyrosine). Position 61 (serine 61) interacts with Mn(2+). Serine 61 serves as the catalytic Phosphoserine intermediate. Substrate-binding positions include histidine 122, 152 to 153 (RD), arginine 184, arginine 190, 260 to 263 (RPDR), and lysine 335. The Mn(2+) site is built by aspartate 402, histidine 406, aspartate 443, histidine 444, and histidine 461.

This sequence belongs to the BPG-independent phosphoglycerate mutase family. In terms of assembly, monomer. Mn(2+) is required as a cofactor.

It carries out the reaction (2R)-2-phosphoglycerate = (2R)-3-phosphoglycerate. The protein operates within carbohydrate degradation; glycolysis; pyruvate from D-glyceraldehyde 3-phosphate: step 3/5. In terms of biological role, essential for rapid growth and for sporulation. Catalyzes the interconversion of 2-phosphoglycerate and 3-phosphoglycerate. This chain is 2,3-bisphosphoglycerate-independent phosphoglycerate mutase, found in Bacillus anthracis.